A 196-amino-acid polypeptide reads, in one-letter code: Pyridoxine/pyridoxamine 5'-phosphate oxidase (196 aa).

Residues 46–51 (RNVLYK), 61–62 (FT), R67, K68, and Q90 each bind FMN. K51 serves as a coordination point for substrate. Substrate is bound by residues Y108, R112, and S116. FMN-binding positions include 125–126 (QS) and W169. Position 175–177 (175–177 (RLH)) interacts with substrate. Residue R179 coordinates FMN.

Belongs to the pyridoxamine 5'-phosphate oxidase family. In terms of assembly, homodimer. It depends on FMN as a cofactor.

The enzyme catalyses pyridoxamine 5'-phosphate + O2 + H2O = pyridoxal 5'-phosphate + H2O2 + NH4(+). It catalyses the reaction pyridoxine 5'-phosphate + O2 = pyridoxal 5'-phosphate + H2O2. It functions in the pathway cofactor metabolism; pyridoxal 5'-phosphate salvage; pyridoxal 5'-phosphate from pyridoxamine 5'-phosphate: step 1/1. It participates in cofactor metabolism; pyridoxal 5'-phosphate salvage; pyridoxal 5'-phosphate from pyridoxine 5'-phosphate: step 1/1. Its function is as follows. Catalyzes the oxidation of either pyridoxine 5'-phosphate (PNP) or pyridoxamine 5'-phosphate (PMP) into pyridoxal 5'-phosphate (PLP). The sequence is that of Pyridoxine/pyridoxamine 5'-phosphate oxidase from Coxiella burnetii (strain RSA 493 / Nine Mile phase I).